The primary structure comprises 498 residues: ATP synthase subunit beta, chloroplastic (498 aa).

Residue 172–179 (GGAGVGKT) coordinates ATP.

It belongs to the ATPase alpha/beta chains family. F-type ATPases have 2 components, CF(1) - the catalytic core - and CF(0) - the membrane proton channel. CF(1) has five subunits: alpha(3), beta(3), gamma(1), delta(1), epsilon(1). CF(0) has four main subunits: a(1), b(1), b'(1) and c(9-12).

The protein localises to the plastid. The protein resides in the chloroplast thylakoid membrane. The enzyme catalyses ATP + H2O + 4 H(+)(in) = ADP + phosphate + 5 H(+)(out). Produces ATP from ADP in the presence of a proton gradient across the membrane. The catalytic sites are hosted primarily by the beta subunits. The chain is ATP synthase subunit beta, chloroplastic from Gossypium hirsutum (Upland cotton).